The primary structure comprises 154 residues: MAARLCCQLDPARDVLCLRPVGAEPCRRPVSGSLRTLPSSLPSAVPADHGAHLSLRGLPVCAFSSAGPCALRFTSARCMETTVNAPRNLPTVLHKRTLGLSAMSTTKIETYFKDCVFKDWEELGEEIRFKVFVLGGCRHKLVCAPAPCNFFTSA.

Positions 68–117 (PCALRFTSARCMETTVNAPRNLPTVLHKRTLGLSAMSTTKIETYFKDCVF) are mitochondrial targeting sequence.

This sequence belongs to the orthohepadnavirus protein X family. May form homodimer. May interact with host CEBPA, CFLAR, CREB1, DDB1, E4F1, HBXIP, HSPD1/HSP60, NFKBIA, POLR2E and SMAD4. Interacts with host SMC5-SMC6 complex and induces its degradation. Interacts with host TRPC4AP; leading to prevent ubiquitination of TRPC4AP. Interacts with host PLSCR1; this interaction promotes ubiquitination and degradation of HBx and impairs HBx-mediated cell proliferation. Post-translationally, a fraction may be phosphorylated in insect cells and HepG2 cells, a human hepatoblastoma cell line. Phosphorylated in vitro by host protein kinase C or mitogen-activated protein kinase. N-acetylated in insect cells.

Its subcellular location is the host cytoplasm. The protein resides in the host nucleus. The protein localises to the host mitochondrion. Functionally, multifunctional protein that plays a role in silencing host antiviral defenses and promoting viral transcription. Does not seem to be essential for HBV infection. May be directly involved in development of cirrhosis and liver cancer (hepatocellular carcinoma). Most of cytosolic activities involve modulation of cytosolic calcium. The effect on apoptosis is controversial depending on the cell types in which the studies have been conducted. May induce apoptosis by localizing in mitochondria and causing loss of mitochondrial membrane potential. May also modulate apoptosis by binding host CFLAR, a key regulator of the death-inducing signaling complex (DISC). Promotes viral transcription by using the host E3 ubiquitin ligase DDB1 to target the SMC5-SMC6 complex to proteasomal degradation. This host complex would otherwise bind to viral episomal DNA, and prevents its transcription. Moderately stimulates transcription of many different viral and cellular transcription elements. Promoters and enhancers stimulated by HBx contain DNA binding sites for NF-kappa-B, AP-1, AP-2, c-EBP, ATF/CREB, or the calcium-activated factor NF-AT. The sequence is that of Protein X from Gorilla gorilla (western gorilla).